The sequence spans 388 residues: Probable mannan endo-1,4-beta-mannosidase A-1 (388 aa).

A signal peptide spans 1–20 (MKLSPLMALAGLASAQLALA). Tryptophan 93 and asparagine 206 together coordinate substrate. Glutamate 207 (proton donor) is an active-site residue. Asparagine 264 carries an N-linked (GlcNAc...) asparagine glycan. Position 282 (tyrosine 282) interacts with substrate. Residue glutamate 315 is the Nucleophile of the active site. Asparagine 335 carries an N-linked (GlcNAc...) asparagine glycan. Tryptophan 345 lines the substrate pocket.

Belongs to the glycosyl hydrolase 5 (cellulase A) family.

It is found in the secreted. It carries out the reaction Random hydrolysis of (1-&gt;4)-beta-D-mannosidic linkages in mannans, galactomannans and glucomannans.. Its function is as follows. Endo-1,4-mannanase, a crucial enzyme for depolymerization of seed galactomannans and wood galactoglucomannans. The chain is Probable mannan endo-1,4-beta-mannosidase A-1 (manA-1) from Aspergillus terreus (strain NIH 2624 / FGSC A1156).